A 271-amino-acid chain; its full sequence is Dirigent protein 17 (271 aa).

The segment covering 1-12 (MEDTGSIKQEAQ) has biased composition (polar residues). The interval 1 to 22 (MEDTGSIKQEAQSHPPGIFEIP) is disordered. N-linked (GlcNAc...) asparagine glycosylation occurs at Asn-255.

Belongs to the plant dirigent protein family. As to quaternary structure, homodimer.

The protein resides in the secreted. It localises to the extracellular space. The protein localises to the apoplast. In terms of biological role, dirigent proteins impart stereoselectivity on the phenoxy radical-coupling reaction, yielding optically active lignans from two molecules of coniferyl alcohol in the biosynthesis of lignans, flavonolignans, and alkaloids and thus plays a central role in plant secondary metabolism. The protein is Dirigent protein 17 (DIR17) of Arabidopsis thaliana (Mouse-ear cress).